We begin with the raw amino-acid sequence, 198 residues long: Inosine triphosphate pyrophosphatase (198 aa).

Position 2 is an N-acetylalanine (alanine 2). Residue threonine 14 to lysine 19 participates in ITP binding. Residue glutamate 44 participates in Mg(2+) binding. ITP is bound by residues lysine 56, aspartate 72–threonine 73, and lysine 89. Phosphoserine is present on serine 146. Residues phenylalanine 149 to aspartate 152, lysine 172, and histidine 177 to arginine 178 each bind ITP.

The protein belongs to the HAM1 NTPase family. In terms of assembly, homodimer. It depends on Mg(2+) as a cofactor. Mn(2+) is required as a cofactor.

The protein resides in the cytoplasm. It catalyses the reaction ITP + H2O = IMP + diphosphate + H(+). It carries out the reaction dITP + H2O = dIMP + diphosphate + H(+). The enzyme catalyses XTP + H2O = XMP + diphosphate + H(+). The catalysed reaction is N(6)-hydroxy-dATP + H2O = N(6)-hydroxy-dAMP + diphosphate + H(+). Pyrophosphatase that hydrolyzes the non-canonical purine nucleotides inosine triphosphate (ITP), deoxyinosine triphosphate (dITP) as well as 2'-deoxy-N-6-hydroxylaminopurine triphosphate (dHAPTP) and xanthosine 5'-triphosphate (XTP) to their respective monophosphate derivatives. The enzyme does not distinguish between the deoxy- and ribose forms. Probably excludes non-canonical purines from RNA and DNA precursor pools, thus preventing their incorporation into RNA and DNA and avoiding chromosomal lesions. The sequence is that of Inosine triphosphate pyrophosphatase (Itpa) from Mus musculus (Mouse).